Here is a 189-residue protein sequence, read N- to C-terminus: MQIWAGLGNPGSSYALNRHNVGFMAVDMLASEKSFAPWKRAFQGQVSLGQIDQERILLLKPATFMNESGRAIGEAMRFYKLAPEDVTVFHDELDIAPMRVKVKKGGGAAGHNGLRSTIAHIGQSFRRVRLGIGHPGEKSRVHDYVLGNFAKSETDSLADMLNAINQAIPWLANDDDARFMSEIALRRQS.

Residue tyrosine 14 coordinates tRNA. Residue histidine 19 is the Proton acceptor of the active site. Phenylalanine 64, asparagine 66, and asparagine 112 together coordinate tRNA.

The protein belongs to the PTH family. In terms of assembly, monomer.

It is found in the cytoplasm. The enzyme catalyses an N-acyl-L-alpha-aminoacyl-tRNA + H2O = an N-acyl-L-amino acid + a tRNA + H(+). In terms of biological role, hydrolyzes ribosome-free peptidyl-tRNAs (with 1 or more amino acids incorporated), which drop off the ribosome during protein synthesis, or as a result of ribosome stalling. Functionally, catalyzes the release of premature peptidyl moieties from peptidyl-tRNA molecules trapped in stalled 50S ribosomal subunits, and thus maintains levels of free tRNAs and 50S ribosomes. In Zymomonas mobilis subsp. mobilis (strain ATCC 31821 / ZM4 / CP4), this protein is Peptidyl-tRNA hydrolase.